The primary structure comprises 123 residues: Large ribosomal subunit protein eL8 (123 aa).

The protein belongs to the eukaryotic ribosomal protein eL8 family. In terms of assembly, part of the 50S ribosomal subunit. Probably part of the RNase P complex.

Its subcellular location is the cytoplasm. Its function is as follows. Multifunctional RNA-binding protein that recognizes the K-turn motif in ribosomal RNA, the RNA component of RNase P, box H/ACA, box C/D and box C'/D' sRNAs. In Pyrococcus abyssi (strain GE5 / Orsay), this protein is Large ribosomal subunit protein eL8.